We begin with the raw amino-acid sequence, 560 residues long: Protein yellow (560 aa).

The first 30 residues, 1–30 (MHVQDKGGIGALTALSLLLVAVTMVTPTQA), serve as a signal peptide directing secretion. N-linked (GlcNAc...) asparagine glycosylation is found at Asn153 and Asn224. Residues 452-492 (QYRPVLPQKPQTSWGPSPPSRSYLPSLGASPGGPGQVVSSV) are disordered. A compositionally biased stretch (low complexity) spans 471–480 (SRSYLPSLGA).

It belongs to the major royal jelly protein family.

It is found in the secreted. Controls the pigmentation pattern of the adult cuticle and larval mouth parts. The polypeptide is Protein yellow (y) (Drosophila pseudoobscura pseudoobscura (Fruit fly)).